The following is a 23-amino-acid chain: Dahlein-4.3 (23 aa).

As to expression, expressed by the skin dorsal glands.

The protein localises to the secreted. Has no antimicrobial activity. The chain is Dahlein-4.3 from Ranoidea dahlii (Dahl's aquatic frog).